The sequence spans 305 residues: Epoxyqueuosine reductase (305 aa).

D128 functions as the Proton donor in the catalytic mechanism. Residues 170–202 enclose the 4Fe-4S ferredoxin-type domain; sequence LSLTSDTPHAKYCGTCRKCLDICPTKAIVHPFV. [4Fe-4S] cluster-binding residues include C182, C185, C188, C192, C208, C236, C239, and C243.

It belongs to the QueG family. As to quaternary structure, monomer. It depends on cob(II)alamin as a cofactor. [4Fe-4S] cluster is required as a cofactor.

The protein localises to the cytoplasm. It catalyses the reaction epoxyqueuosine(34) in tRNA + AH2 = queuosine(34) in tRNA + A + H2O. The protein operates within tRNA modification; tRNA-queuosine biosynthesis. Functionally, catalyzes the conversion of epoxyqueuosine (oQ) to queuosine (Q), which is a hypermodified base found in the wobble positions of tRNA(Asp), tRNA(Asn), tRNA(His) and tRNA(Tyr). The polypeptide is Epoxyqueuosine reductase (Atelocyanobacterium thalassa (isolate ALOHA)).